Reading from the N-terminus, the 405-residue chain is F-box/kelch-repeat protein At2g43445 (405 aa).

The F-box domain maps to 7 to 53; that stretch reads NTNSIYIVSELLEEIFLGLPLKSILKFKTVSKQWRSILESNLFVERR. 2 Kelch repeats span residues 146-197 and 356-400; these read RDKV…CVNG and THHD…VVGY.

The sequence is that of F-box/kelch-repeat protein At2g43445 from Arabidopsis thaliana (Mouse-ear cress).